Consider the following 402-residue polypeptide: Peptidyl-prolyl cis-trans isomerase FKBP8 (402 aa).

Positions 28–39 are enriched in acidic residues; sequence DGVDDAEEEDDL. The disordered stretch occupies residues 28 to 54; it reads DGVDDAEEEDDLSGLPPLEDMGQPTVE. Residues 110-194 form the PPIase FKBP-type domain; it reads GQVVTVHLQM…CLEVTLKTAE (85 aa). Residues 211 to 244 form a TPR 1 repeat; that stretch reads ANRKRECGNAHYQRADFVLAANSYDLAIKAITSN. Glycyl lysine isopeptide (Lys-Gly) (interchain with G-Cter in ubiquitin) cross-links involve residues Lys-239, Lys-261, Lys-263, and Lys-274. TPR repeat units follow at residues 262 to 295 and 296 to 329; these read VKCLNNLAASQLKLDHYRAALRSCSQVLEHQPDN and IKALFRKGKVLAQQGEYSEAIPILRAALKLEPSN. Ser-286 bears the Phosphoserine mark. Residues Lys-297, Lys-304, Lys-324, Lys-330, Lys-338, Lys-341, and Lys-342 each participate in a glycyl lysine isopeptide (Lys-Gly) (interchain with G-Cter in ubiquitin) cross-link. The helical transmembrane segment at 380–400 threads the bilayer; that stretch reads WLFGATAVALGGVALSVVIAA.

In terms of assembly, homomultimers or heteromultimers (Potential). Forms heterodimer with calmodulin. When activated by calmodulin and calcium, interacts with the BH4 domain of BCL2 and weakly with BCLX isoform Bcl-X(L). Does not bind and inhibit calcineurin. Interacts with ZFYVE27; may negatively regulate ZFYVE27 phosphorylation. The cofactor is Ca(2+). Post-translationally, ubiquitinated by PRKN during mitophagy, leading to its degradation and enhancement of mitophagy. Deubiquitinated by USP30. Detected throughout the embryonic body, in caudal neural tube, limbs and head. Detected in adult retina, brain, heart, kidney, liver, pancreas, lung, testis and urinary bladder (at protein level). Detected in adult brain, kidney, liver, testis and trigeminal nerve, and in embryo. Detected at lower levels in lung, spleen, heart and ovary. Widely expressed in forebrain. Detected in the Purkinje cell layer in the cerebellum and in hippocampus neurons.

The protein localises to the mitochondrion membrane. The catalysed reaction is [protein]-peptidylproline (omega=180) = [protein]-peptidylproline (omega=0). Functionally, constitutively inactive PPiase, which becomes active when bound to calmodulin and calcium. Seems to act as a chaperone for BCL2, targets it to the mitochondria and modulates its phosphorylation state. The BCL2/FKBP8/calmodulin/calcium complex probably interferes with the binding of BCL2 to its targets. The active form of FKBP8 may therefore play a role in the regulation of apoptosis. Required for normal embryonic development. The sequence is that of Peptidyl-prolyl cis-trans isomerase FKBP8 (Fkbp8) from Mus musculus (Mouse).